The primary structure comprises 1450 residues: Protein TIC 214 (1450 aa).

Transmembrane regions (helical) follow at residues 29–49 (FGLY…IVVI), 61–81 (VMAF…IYYT), 86–106 (LFIK…FYWQ), 132–152 (FFDS…PIFF), 166–186 (LNFF…FFNA), and 213–233 (IIPI…HIPF).

It belongs to the TIC214 family. In terms of assembly, part of the Tic complex.

The protein resides in the plastid. It is found in the chloroplast inner membrane. Functionally, involved in protein precursor import into chloroplasts. May be part of an intermediate translocation complex acting as a protein-conducting channel at the inner envelope. This Chaetosphaeridium globosum (Charophycean green alga) protein is Protein TIC 214.